We begin with the raw amino-acid sequence, 378 residues long: Lipid-A-disaccharide synthase (378 aa).

This sequence belongs to the LpxB family.

It carries out the reaction a lipid X + a UDP-2-N,3-O-bis[(3R)-3-hydroxyacyl]-alpha-D-glucosamine = a lipid A disaccharide + UDP + H(+). It participates in bacterial outer membrane biogenesis; LPS lipid A biosynthesis. Functionally, condensation of UDP-2,3-diacylglucosamine and 2,3-diacylglucosamine-1-phosphate to form lipid A disaccharide, a precursor of lipid A, a phosphorylated glycolipid that anchors the lipopolysaccharide to the outer membrane of the cell. The polypeptide is Lipid-A-disaccharide synthase (Methylobacillus flagellatus (strain ATCC 51484 / DSM 6875 / VKM B-1610 / KT)).